Reading from the N-terminus, the 263-residue chain is 3'-5' ssDNA/RNA exonuclease TatD (263 aa).

3 residues coordinate a divalent metal cation: glutamate 91, histidine 127, and histidine 152.

Belongs to the metallo-dependent hydrolases superfamily. TatD-type hydrolase family. TatD subfamily. As to quaternary structure, monomer. The cofactor is Mg(2+).

Its subcellular location is the cytoplasm. Its function is as follows. 3'-5' exonuclease that prefers single-stranded DNA and RNA. May play a role in the H(2)O(2)-induced DNA damage repair. In Cronobacter sakazakii (strain ATCC BAA-894) (Enterobacter sakazakii), this protein is 3'-5' ssDNA/RNA exonuclease TatD.